The primary structure comprises 354 residues: UDP-N-acetylglucosamine--N-acetylmuramyl-(pentapeptide) pyrophosphoryl-undecaprenol N-acetylglucosamine transferase (354 aa).

Residues 11–13, R164, S194, and Q289 each bind UDP-N-acetyl-alpha-D-glucosamine; that span reads TAG.

Belongs to the glycosyltransferase 28 family. MurG subfamily.

It localises to the cell membrane. The catalysed reaction is di-trans,octa-cis-undecaprenyl diphospho-N-acetyl-alpha-D-muramoyl-L-alanyl-D-glutamyl-meso-2,6-diaminopimeloyl-D-alanyl-D-alanine + UDP-N-acetyl-alpha-D-glucosamine = di-trans,octa-cis-undecaprenyl diphospho-[N-acetyl-alpha-D-glucosaminyl-(1-&gt;4)]-N-acetyl-alpha-D-muramoyl-L-alanyl-D-glutamyl-meso-2,6-diaminopimeloyl-D-alanyl-D-alanine + UDP + H(+). It functions in the pathway cell wall biogenesis; peptidoglycan biosynthesis. In terms of biological role, cell wall formation. Catalyzes the transfer of a GlcNAc subunit on undecaprenyl-pyrophosphoryl-MurNAc-pentapeptide (lipid intermediate I) to form undecaprenyl-pyrophosphoryl-MurNAc-(pentapeptide)GlcNAc (lipid intermediate II). This is UDP-N-acetylglucosamine--N-acetylmuramyl-(pentapeptide) pyrophosphoryl-undecaprenol N-acetylglucosamine transferase from Lachnospira eligens (strain ATCC 27750 / DSM 3376 / VPI C15-48 / C15-B4) (Eubacterium eligens).